Reading from the N-terminus, the 543-residue chain is Chaperonin GroEL 2 (543 aa).

Residues 29–32, 86–90, G413, 478–480, and D494 contribute to the ATP site; these read TLGP, DGTTT, and NAA.

The protein belongs to the chaperonin (HSP60) family. In terms of assembly, forms a cylinder of 14 subunits composed of two heptameric rings stacked back-to-back. Interacts with the co-chaperonin GroES.

The protein localises to the cytoplasm. The catalysed reaction is ATP + H2O + a folded polypeptide = ADP + phosphate + an unfolded polypeptide.. Its function is as follows. Together with its co-chaperonin GroES, plays an essential role in assisting protein folding. The GroEL-GroES system forms a nano-cage that allows encapsulation of the non-native substrate proteins and provides a physical environment optimized to promote and accelerate protein folding. In Thermosynechococcus vestitus (strain NIES-2133 / IAM M-273 / BP-1), this protein is Chaperonin GroEL 2.